Here is a 281-residue protein sequence, read N- to C-terminus: Aliphatic sulfonates import ATP-binding protein SsuB (281 aa).

An ABC transporter domain is found at 40–263 (LTLRNLRKSF…RRGSADLAAL (224 aa)). 72-79 (GRSGCGKS) contributes to the ATP binding site.

The protein belongs to the ABC transporter superfamily. Aliphatic sulfonates importer (TC 3.A.1.17.2) family. In terms of assembly, the complex is composed of two ATP-binding proteins (SsuB), two transmembrane proteins (SsuC) and a solute-binding protein (SsuA).

Its subcellular location is the cell inner membrane. The catalysed reaction is ATP + H2O + aliphatic sulfonate-[sulfonate-binding protein]Side 1 = ADP + phosphate + aliphatic sulfonateSide 2 + [sulfonate-binding protein]Side 1.. In terms of biological role, part of the ABC transporter complex SsuABC involved in aliphatic sulfonates import. Responsible for energy coupling to the transport system. The protein is Aliphatic sulfonates import ATP-binding protein SsuB of Rhodopseudomonas palustris (strain BisA53).